The chain runs to 112 residues: Gonad-inhibiting hormone (112 aa).

The signal sequence occupies residues 1 to 31 (MVTRVGSGFSVQRVWLLLVIVVVLCGSVTQQ). Intrachain disulfides connect cysteine 41–cysteine 78, cysteine 58–cysteine 74, and cysteine 61–cysteine 87. At alanine 109 the chain carries Alanine amide.

Produced in the eyestalk X-organ sinus gland complex of male and female lobsters.

It is found in the secreted. In terms of biological role, inhibits vitellogenesis in female animals. Plays a prominent role in the regulation of reproduction/molting processes. This is Gonad-inhibiting hormone from Homarus americanus (American lobster).